A 139-amino-acid polypeptide reads, in one-letter code: Autophagy-related protein 31 (139 aa).

This sequence belongs to the ATG31 family. As to quaternary structure, forms a stable complex with ATG17 and ATG29. Interacts directly with ATG29. The ATG17-ATG29-ATG31 complex interacts with the ATG1-ATG13 complex. Note=The interaction with the ATG1-ATG13 complex is induced by starvation.

It is found in the preautophagosomal structure. Its function is as follows. Plays a role in starvation-induced autophagy. Involved in mitophagy. Functions with ATG17 and ATG29 at the preautophagosomal structure (PAS) in order to form normal autophagosomes under starvation conditions. This chain is Autophagy-related protein 31, found in Kluyveromyces marxianus (strain DMKU3-1042 / BCC 29191 / NBRC 104275) (Yeast).